The following is a 122-amino-acid chain: Small ribosomal subunit protein uS13 (122 aa).

Positions 95-122 are disordered; that stretch reads GLPVHGQRTHTNARTRKGPRRGAVGKKK.

Belongs to the universal ribosomal protein uS13 family. Part of the 30S ribosomal subunit. Forms a loose heterodimer with protein S19. Forms two bridges to the 50S subunit in the 70S ribosome.

In terms of biological role, located at the top of the head of the 30S subunit, it contacts several helices of the 16S rRNA. In the 70S ribosome it contacts the 23S rRNA (bridge B1a) and protein L5 of the 50S subunit (bridge B1b), connecting the 2 subunits; these bridges are implicated in subunit movement. Contacts the tRNAs in the A and P-sites. This chain is Small ribosomal subunit protein uS13, found in Nitratidesulfovibrio vulgaris (strain DSM 19637 / Miyazaki F) (Desulfovibrio vulgaris).